A 525-amino-acid polypeptide reads, in one-letter code: ATP synthase subunit alpha (525 aa).

Residue 169 to 176 (GDRQTGKT) participates in ATP binding.

This sequence belongs to the ATPase alpha/beta chains family. F-type ATPases have 2 components, CF(1) - the catalytic core - and CF(0) - the membrane proton channel. CF(1) has five subunits: alpha(3), beta(3), gamma(1), delta(1), epsilon(1). CF(0) has three main subunits: a(1), b(2) and c(9-12). The alpha and beta chains form an alternating ring which encloses part of the gamma chain. CF(1) is attached to CF(0) by a central stalk formed by the gamma and epsilon chains, while a peripheral stalk is formed by the delta and b chains.

The protein localises to the cell membrane. It catalyses the reaction ATP + H2O + 4 H(+)(in) = ADP + phosphate + 5 H(+)(out). Produces ATP from ADP in the presence of a proton gradient across the membrane. The alpha chain is a regulatory subunit. In Mycoplasma capricolum subsp. capricolum (strain California kid / ATCC 27343 / NCTC 10154), this protein is ATP synthase subunit alpha.